The following is a 72-amino-acid chain: Sperm protein associated with the nucleus on the X chromosome N1 (72 aa).

The disordered stretch occupies residues 1–40 (MEKPTSSTNGEKRKSPCDSNSKNDEMQETPNRDLVLEPSL). Basic and acidic residues predominate over residues 10-35 (GEKRKSPCDSNSKNDEMQETPNRDLV).

The protein belongs to the SPAN-X family.

The polypeptide is Sperm protein associated with the nucleus on the X chromosome N1 (SPANXN1) (Pan troglodytes (Chimpanzee)).